A 75-amino-acid chain; its full sequence is ATP synthase subunit c (75 aa).

The next 2 helical transmembrane spans lie at 8–28 and 54–74; these read FIAI…VANI and AGMV…LMFV.

This sequence belongs to the ATPase C chain family. In terms of assembly, F-type ATPases have 2 components, F(1) - the catalytic core - and F(0) - the membrane proton channel. F(1) has five subunits: alpha(3), beta(3), gamma(1), delta(1), epsilon(1). F(0) has three main subunits: a(1), b(2) and c(10-14). The alpha and beta chains form an alternating ring which encloses part of the gamma chain. F(1) is attached to F(0) by a central stalk formed by the gamma and epsilon chains, while a peripheral stalk is formed by the delta and b chains.

The protein localises to the cell membrane. F(1)F(0) ATP synthase produces ATP from ADP in the presence of a proton or sodium gradient. F-type ATPases consist of two structural domains, F(1) containing the extramembraneous catalytic core and F(0) containing the membrane proton channel, linked together by a central stalk and a peripheral stalk. During catalysis, ATP synthesis in the catalytic domain of F(1) is coupled via a rotary mechanism of the central stalk subunits to proton translocation. Functionally, key component of the F(0) channel; it plays a direct role in translocation across the membrane. A homomeric c-ring of between 10-14 subunits forms the central stalk rotor element with the F(1) delta and epsilon subunits. In Wolbachia sp. subsp. Brugia malayi (strain TRS), this protein is ATP synthase subunit c.